The sequence spans 60 residues: Small, acid-soluble spore protein H 1 (60 aa).

A disordered region spans residues 39-60 (IHPLDNPNQKQSVPVASLEEHS).

It belongs to the SspH family.

The protein localises to the spore core. The protein is Small, acid-soluble spore protein H 1 of Geobacillus kaustophilus (strain HTA426).